The primary structure comprises 120 residues: Jacalin-related lectin 39 (120 aa).

Residues 6 to 120 form the Jacalin-type lectin domain; the sequence is SRDHADFVAH…KRTFDFGGFN (115 aa).

This sequence belongs to the jacalin lectin family.

The polypeptide is Jacalin-related lectin 39 (JAL39) (Arabidopsis thaliana (Mouse-ear cress)).